Here is a 356-residue protein sequence, read N- to C-terminus: Glutamine synthetase PR-1 (356 aa).

In terms of domain architecture, GS beta-grasp spans Val-19–Gly-99. The tract at residues Pro-41–Pro-64 is disordered. A GS catalytic domain is found at Lys-106–Pro-356.

Belongs to the glutamine synthetase family. As to quaternary structure, homooctamer. Roots.

Its subcellular location is the cytoplasm. The catalysed reaction is L-glutamate + NH4(+) + ATP = L-glutamine + ADP + phosphate + H(+). The chain is Glutamine synthetase PR-1 from Phaseolus vulgaris (Kidney bean).